The primary structure comprises 260 residues: 3-methyl-2-oxobutanoate hydroxymethyltransferase (260 aa).

Mg(2+)-binding residues include D42 and D81. Residues D42–S43, D81, and K109 contribute to the 3-methyl-2-oxobutanoate site. E111 contributes to the Mg(2+) binding site. E178 acts as the Proton acceptor in catalysis.

It belongs to the PanB family. As to quaternary structure, homodecamer; pentamer of dimers. Mg(2+) is required as a cofactor.

The protein localises to the cytoplasm. It carries out the reaction 3-methyl-2-oxobutanoate + (6R)-5,10-methylene-5,6,7,8-tetrahydrofolate + H2O = 2-dehydropantoate + (6S)-5,6,7,8-tetrahydrofolate. It participates in cofactor biosynthesis; (R)-pantothenate biosynthesis; (R)-pantoate from 3-methyl-2-oxobutanoate: step 1/2. Catalyzes the reversible reaction in which hydroxymethyl group from 5,10-methylenetetrahydrofolate is transferred onto alpha-ketoisovalerate to form ketopantoate. The protein is 3-methyl-2-oxobutanoate hydroxymethyltransferase of Ruthia magnifica subsp. Calyptogena magnifica.